Consider the following 430-residue polypeptide: Enolase (430 aa).

Residue Q167 participates in (2R)-2-phosphoglycerate binding. The active-site Proton donor is E209. Mg(2+) is bound by residues D246, E289, and D316. (2R)-2-phosphoglycerate is bound by residues K341, R370, S371, and K392. Residue K341 is the Proton acceptor of the active site.

The protein belongs to the enolase family. As to quaternary structure, component of the RNA degradosome, a multiprotein complex involved in RNA processing and mRNA degradation. Mg(2+) serves as cofactor.

It is found in the cytoplasm. The protein resides in the secreted. It localises to the cell surface. The catalysed reaction is (2R)-2-phosphoglycerate = phosphoenolpyruvate + H2O. It participates in carbohydrate degradation; glycolysis; pyruvate from D-glyceraldehyde 3-phosphate: step 4/5. In terms of biological role, catalyzes the reversible conversion of 2-phosphoglycerate (2-PG) into phosphoenolpyruvate (PEP). It is essential for the degradation of carbohydrates via glycolysis. The chain is Enolase from Alteromonas mediterranea (strain DSM 17117 / CIP 110805 / LMG 28347 / Deep ecotype).